A 1335-amino-acid chain; its full sequence is Regulatory-associated protein of mTOR (1335 aa).

S44 and S122 each carry phosphoserine. Position 696 is a phosphoserine; by MAPK8 (S696). T700 carries O-linked (GlcNAc) threonine glycosylation. Residue T706 is modified to Phosphothreonine; by MAPK8. Residues S719 and S721 each carry the phosphoserine; by RPS6KA1 modification. Residue S722 is modified to Phosphoserine; by AMPK and RPS6KA1. S738 carries the phosphoserine modification. Residues 749–771 (GSSVAFSPGNLSTSSSASSTLGS) form a disordered region. Low complexity predominate over residues 755–771 (SPGNLSTSSSASSTLGS). Residue S791 is modified to Phosphoserine. S792 is modified (phosphoserine; by AMPK). Phosphoserine is present on residues S836 and S855. Over residues 853-866 (TSSLTQSAPASPTN) the composition is skewed to polar residues. Residues 853 to 942 (TSSLTQSAPA…GPDQTTDDAD (90 aa)) are disordered. At S859 the chain carries Phosphoserine; by MTOR. S863 bears the Phosphoserine; by MAPK8, MTOR and NLK mark. Phosphothreonine is present on T865. At S877 the chain carries Phosphoserine. The segment covering 877 to 887 (SPPASSTSSCS) has biased composition (low complexity). The segment covering 888-898 (LTNDVAKQTVS) has biased composition (polar residues). Glycyl lysine isopeptide (Lys-Gly) (interchain with G-Cter in ubiquitin) cross-links involve residues K932 and K948. Residue S982 is modified to Phosphoserine. WD repeat units follow at residues 1020–1061 (NRNP…DYFH), 1065–1106 (PRYT…EKNP), 1121–1160 (TTRGAGMVVDWEQETGLLMSSGDVRIVRIWDTDRETKVQD), 1164–1203 (GADSCVTSLSCDSHRSLIVAGLGDGSIRVYDRRMALSECR), 1209–1249 (EHTA…SVNV), 1251–1291 (QIVK…NNIK), and 1299–1335 (QRVGAISCLAFHPHWPHLAVGSNDYYISVYSVEKRVR). N6-acetyllysine is present on K1097.

Belongs to the WD repeat RAPTOR family. In terms of assembly, part of the mechanistic target of rapamycin complex 1 (mTORC1) which contains MTOR, MLST8 and RPTOR. mTORC1 associates with AKT1S1/PRAS40, which inhibits its activity. mTORC1 associates with DEPTOR, which regulates its activity. mTORC1 binds to and is inhibited by FKBP12-rapamycin. Forms a complex with MTOR under both leucine-rich and -poor conditions. Interacts with (via TOS motifs) EIF4EBP1 and RPS6KB1; interaction is independent of its association with MTOR. Binds preferentially to poorly or non-phosphorylated forms of EIF4EBP1, and this binding is critical to the ability of MTOR to catalyze phosphorylation. Interacts with ULK1 in a nutrient-dependent manner; the interaction is reduced during starvation. Interacts with GTP-bound form of RagA/RRAGA or RagB/RRAGB and GDP-bound form of RagC/RRAGC or RagD/RRAGD, promoting recruitment of mTORC1 to the lysosomes. Interacts (when phosphorylated by AMPK) with 14-3-3 protein, leading to inhibition of its activity. Interacts with SPAG5; SPAG5 competes with MTOR for RPTOR-binding, resulting in decreased mTORC1 formation. Interacts with WAC; WAC positively regulates MTOR activity by promoting the assembly of the TTT complex composed of TELO2, TTI1 and TTI2 and the RUVBL complex composed of RUVBL1 and RUVBL2 into the TTT-RUVBL complex which leads to the dimerization of the mTORC1 complex and its subsequent activation. Interacts with G3BP1. The complex formed with G3BP1 and SPAG5 is increased by oxidative stress. Interacts with HTR6. Interacts with PIH1D1. Interacts with LARP1. Interacts with BRAT1. Interacts with SIK3. Interacts with SLC38A7; this interaction mediates the recruitment of mTORC1 to the lysosome and its subsequent activation. Insulin-stimulated phosphorylation at Ser-863 by MTOR and MAPK8 regulates mTORC1 activity. Phosphorylated at Ser-863 by NLK in response to stress, disrupting the interaction with small GTPases Rag (RagA/RRAGA, RagB/RRAGB, RagC/RRAGC and/or RagD/RRAGD), thereby preventing lysosome recruitment and activation of the mTORC1 complex. Osmotic stress also induces phosphorylation at Ser-696, Thr-706 and Ser-863 by MAPK8. Ser-863 phosphorylation is required for phosphorylation at Ser-855 and Ser-859. In response to nutrient limitation, phosphorylated at Ser-722 and Ser-792 by AMPK; phosphorylation promotes interaction with 14-3-3 proteins, leading to negative regulation of the mTORC1 complex. Phosphorylation at Ser-722 and Ser-792 by AMPK in response to glucose starvation inhibits O-GlcNAcylation by OGT and subsequent activation of mTORC1. In response to growth factors, phosphorylated at Ser-719, Ser-721 and Ser-722 by RPS6KA1, which stimulates mTORC1 activity. Phosphorylation at Ser-791 by PKA downstream of cAMP inhibits the mTORC1 complex. Phosphorylated at Ser-877 by TBK1, leading to negative regulation of the mTORC1 complex. Post-translationally, O-GlcNAcylated by OGT upon glucose sufficiency, promoting interaction with small GTPases Rag (RagA/RRAGA, RagB/RRAGB, RagC/RRAGC and/or RagD/RRAGD) and subsequent recruitment of mTORC1 to lysosomal membranes, leading to activation of the mTORC1 complex. Phosphorylation at Ser-722 and Ser-792 by AMPK in response to glucose starvation inhibits O-GlcNAcylation. In terms of processing, acetylation at Lys-1097 by EP300/p300 in response to leucine metabolite acetyl-coA promotes its activity, leading to activation of the mTORC1 complex. Acetylation is decreased in response to fasting. Phosphorylated at Ser-877 by TBK1, leading to negative regulation of the mTORC1 complex. Ubiquitinated, leading to its degradation by the proteasome. Deubiquitinated by OTUB1 via a non-catalytic mechanism. Ubiquitinated by an E3 ubiquitin ligase complex containing VHL.

Its subcellular location is the cytoplasm. The protein resides in the lysosome. It is found in the cytoplasmic granule. In terms of biological role, component of the mechanistic target of rapamycin complex 1 (mTORC1), an evolutionarily conserved central nutrient sensor that stimulates anabolic reactions and macromolecule biosynthesis to promote cellular biomass generation and growth. In response to nutrients, growth factors or amino acids, mTORC1 is recruited to the lysosome membrane and promotes protein, lipid and nucleotide synthesis by phosphorylating several substrates, such as ribosomal protein S6 kinase (RPS6KB1 and RPS6KB2) and EIF4EBP1 (4E-BP1). In the same time, it inhibits catabolic pathways by phosphorylating the autophagy initiation components ULK1 and ATG13, as well as transcription factor TFEB, a master regulators of lysosomal biogenesis and autophagy. The mTORC1 complex is inhibited in response to starvation and amino acid depletion. Within the mTORC1 complex, RPTOR acts both as a molecular adapter, which (1) mediates recruitment of mTORC1 to lysosomal membranes via interaction with small GTPases Rag (RagA/RRAGA, RagB/RRAGB, RagC/RRAGC and/or RagD/RRAGD), and a (2) substrate-specific adapter, which promotes substrate specificity by binding to TOS motif-containing proteins and direct them towards the active site of the MTOR kinase domain for phosphorylation. mTORC1 complex regulates many cellular processes, such as odontoblast and osteoclast differentiation or neuronal transmission. mTORC1 complex in excitatory neuronal transmission is required for the prosocial behavior induced by the psychoactive substance lysergic acid diethylamide (LSD). The protein is Regulatory-associated protein of mTOR of Mus musculus (Mouse).